We begin with the raw amino-acid sequence, 88 residues long: Small ribosomal subunit protein bS16 (88 aa).

The protein belongs to the bacterial ribosomal protein bS16 family.

The chain is Small ribosomal subunit protein bS16 from Geobacter metallireducens (strain ATCC 53774 / DSM 7210 / GS-15).